Consider the following 419-residue polypeptide: Tol-Pal system protein TolB (419 aa).

An N-terminal signal peptide occupies residues 1 to 19 (MFNRIISLFLLLFTGQVIA).

It belongs to the TolB family. The Tol-Pal system is composed of five core proteins: the inner membrane proteins TolA, TolQ and TolR, the periplasmic protein TolB and the outer membrane protein Pal. They form a network linking the inner and outer membranes and the peptidoglycan layer.

The protein localises to the periplasm. In terms of biological role, part of the Tol-Pal system, which plays a role in outer membrane invagination during cell division and is important for maintaining outer membrane integrity. The polypeptide is Tol-Pal system protein TolB (Legionella pneumophila subsp. pneumophila (strain Philadelphia 1 / ATCC 33152 / DSM 7513)).